We begin with the raw amino-acid sequence, 115 residues long: NADH-ubiquinone oxidoreductase chain 3 (115 aa).

3 helical membrane-spanning segments follow: residues Leu4–Leu24, Phe55–Leu75, and Met87–Met107.

It belongs to the complex I subunit 3 family. Core subunit of respiratory chain NADH dehydrogenase (Complex I) which is composed of 45 different subunits. Interacts with TMEM186. Interacts with TMEM242.

The protein resides in the mitochondrion inner membrane. It catalyses the reaction a ubiquinone + NADH + 5 H(+)(in) = a ubiquinol + NAD(+) + 4 H(+)(out). Its function is as follows. Core subunit of the mitochondrial membrane respiratory chain NADH dehydrogenase (Complex I) which catalyzes electron transfer from NADH through the respiratory chain, using ubiquinone as an electron acceptor. Essential for the catalytic activity of complex I. This chain is NADH-ubiquinone oxidoreductase chain 3, found in Peromyscus mexicanus (Mexican deer mouse).